A 65-amino-acid chain; its full sequence is Large ribosomal subunit protein bL35 (65 aa).

A disordered region spans residues 1-40 (MPKMKTNSGSKKRFALTGTGKIKRKHAFHSHILTKKSKKR). The span at 21–40 (KIKRKHAFHSHILTKKSKKR) shows a compositional bias: basic residues.

Belongs to the bacterial ribosomal protein bL35 family.

The sequence is that of Large ribosomal subunit protein bL35 from Bacteroides fragilis (strain ATCC 25285 / DSM 2151 / CCUG 4856 / JCM 11019 / LMG 10263 / NCTC 9343 / Onslow / VPI 2553 / EN-2).